We begin with the raw amino-acid sequence, 385 residues long: Telomere-binding protein subunit beta (385 aa).

Disordered stretches follow at residues 231-329 and 343-385; these read AADH…ALTT and WHEK…AAKK. Over residues 242 to 262 the composition is skewed to basic residues; it reads GGAKGKGKAAAKAAKGKKLSA. Positions 263–280 are enriched in basic and acidic residues; that stretch reads KKGDSSAADVRKSVDKIV. Low complexity-rich tracts occupy residues 295 to 304, 312 to 326, and 365 to 375; these read KSQAPAAGKS, KAVPSAPSPSGKKSA, and GKASATSGKAS. Residues 376-385 show a composition bias toward basic residues; the sequence is KASKKTAAKK.

Heterodimer of an alpha and a beta subunit.

It localises to the nucleus. The protein localises to the chromosome. Its subcellular location is the telomere. May function as protective capping of the single-stranded telomeric overhang. May also participate in telomere length regulation during DNA replication. Binds specifically to the T4G4-containing extension on the 3'strand and protects this region of the telomere from nuclease digestion and chemical modification. This Sterkiella nova (Ciliate) protein is Telomere-binding protein subunit beta (MAC-41A).